Reading from the N-terminus, the 173-residue chain is Cytochrome b6-f complex subunit 4, chloroplastic (173 aa).

The transit peptide at 1–14 (ESALERRSSSVVMN) directs the protein to the chloroplast. The next 3 membrane-spanning stretches (helical) occupy residues 49–69 (LLYMFPVCILGTFAAIVGLAV), 108–128 (LLGVLSMAAVPAGLITVPFIE), and 144–164 (SVFLLGTVVAIWLGIGATLPI).

The protein belongs to the cytochrome b family. PetD subfamily. The 4 large subunits of the cytochrome b6-f complex are cytochrome b6, subunit IV (17 kDa polypeptide, petD), cytochrome f and the Rieske protein, while the 4 small subunits are petG, petL, petM and petN. The complex functions as a dimer.

It localises to the plastid. The protein resides in the chloroplast thylakoid membrane. Component of the cytochrome b6-f complex, which mediates electron transfer between photosystem II (PSII) and photosystem I (PSI), cyclic electron flow around PSI, and state transitions. The protein is Cytochrome b6-f complex subunit 4, chloroplastic of Euglena gracilis.